The following is a 587-amino-acid chain: MTHAPTPPAASNFLRPIIEDDLQANRFQGKLWAGKPGPAALQAQGQPDPARIRTRFPPEPNGYLHIGHAKSICVNFGLARDYGGVCHLRFDDTNPEKEEQEYVDAIIEAVHWLGFDWQADGNDNLYFASDYFEFMYEFAEALVQAGHAYVDEQSAEEIRASRGTLTEPGTDSPWRDRPADESLLRLREMRDGKHPDGSLVLRARIDMASPNINLRDPVMYRVRHATHHRTGNAWCIYPMYSWAHPVEDALEGITHSICTLEFEDQRPFYDWILARLAELGKLARPLPHQYEFARLNLTYVVTSKRKLLQLVREGYVDGWDDPRMPTLFGLRRRGYTPSSIRLFCDRTAVSKSDSRIDYSLLEQAVRDDLDPVAPRSVAVLDPLKLVITNYPEGRSETCSAPRNPHDPQAGVREFPFTRELWIEQDDFREEPPKKYFRLFPGNTVRLKYGYVVRCTGFTKDQSGKVVEVQAEYLPDTKSGTPGADSVKVKGNITWVSAAHAVPAQVHLYDRLFADAHPDGGDKDFLACLNPHSKQTVQAWLEPGIEAVPGATWQFERLGYFTVDSKDSRPEAPVLNRIVTLRDSWQAA.

Residues 58 to 68 (PEPNGYLHIGH) carry the 'HIGH' region motif. ATP is bound by residues 59 to 61 (EPN) and 65 to 71 (HIGHAKS). Residues Asp91 and Tyr240 each contribute to the L-glutamine site. ATP-binding positions include Thr259 and 294–295 (RL). A 'KMSKS' region motif is present at residues 301 to 305 (VTSKR).

This sequence belongs to the class-I aminoacyl-tRNA synthetase family. In terms of assembly, monomer.

It is found in the cytoplasm. The enzyme catalyses tRNA(Gln) + L-glutamine + ATP = L-glutaminyl-tRNA(Gln) + AMP + diphosphate. This is Glutamine--tRNA ligase from Bordetella bronchiseptica (strain ATCC BAA-588 / NCTC 13252 / RB50) (Alcaligenes bronchisepticus).